A 436-amino-acid polypeptide reads, in one-letter code: GTPase Der (436 aa).

2 consecutive EngA-type G domains span residues Pro4–Tyr167 and Ile175–Asn351. Residues Gly10–Ser17, Asp57–Ile61, Asn119–Asp122, Gly181–Ser188, Asp229–Met233, and Asn294–Asp297 each bind GTP. The region spanning Thr352–Lys436 is the KH-like domain.

It belongs to the TRAFAC class TrmE-Era-EngA-EngB-Septin-like GTPase superfamily. EngA (Der) GTPase family. Associates with the 50S ribosomal subunit.

GTPase that plays an essential role in the late steps of ribosome biogenesis. The polypeptide is GTPase Der (Streptococcus pneumoniae (strain JJA)).